The following is a 73-amino-acid chain: Exodeoxyribonuclease 7 small subunit (73 aa).

Belongs to the XseB family. Heterooligomer composed of large and small subunits.

Its subcellular location is the cytoplasm. It carries out the reaction Exonucleolytic cleavage in either 5'- to 3'- or 3'- to 5'-direction to yield nucleoside 5'-phosphates.. In terms of biological role, bidirectionally degrades single-stranded DNA into large acid-insoluble oligonucleotides, which are then degraded further into small acid-soluble oligonucleotides. The chain is Exodeoxyribonuclease 7 small subunit from Streptococcus mutans serotype c (strain ATCC 700610 / UA159).